Here is a 625-residue protein sequence, read N- to C-terminus: MESKYVLSTEKESKTKPSGRVNVSDMDSISNSLSKTSLGTRKVPTSLKTDASRSGLSSGGSKTHISDESALRMVYGSTPRDEKTTTTKDSITLAKEKEKKIEKRNEEIKLTFKAIRASECVDLLFIVDCTGSMDPYIEQIKSDIVKLQEALKLKHSFLDIEFGFIRYTDFDVASNRCSTFQFSRSTVEFVRFVSEIRAGGGADGPEDVFGGMDLIKSMKWRPNSTRVVIHIADAPCHGTEYHSMADSYPGGDPNGIKLDDLLTDIISLNINYYFGHINLKETGQMIDFFDKKTKEISRNKKSINSFDSKETSKMNERIFISIEESISVSRSVLTEQYLGHNIDGSTGKQRSEREFEINTNMDIDFGELPYIQMLQTKFKMPSDIVTCLSSSYEMKLNEITISIKIAPNPFSHGACRLAYLGIDEHGKKVVLKQSKYIGGRENSKKRYFESMECQTVAAKFALEFNKQLSLTSSEHQITFTVAKVLQMKHSEKPMYFGIETFINGEYQKYNSNCGWLKDDAMSEILQTFSHWTYQESKNKAIVVDIQGVKTSKGYLLTDPAIHSTDTLRFGSCNLGKPGIIKFFQSHKCNQHCKKLGLTIPSFTSSSSTSSSSRSTSSSSSISYSY.

The segment covering Met1 to Thr15 has biased composition (basic and acidic residues). Residues Met1 to His64 are disordered. Polar residues-rich tracts occupy residues Asp25–Gly39 and Ser46–Thr63. Residues Thr87 to Ala114 are a coiled coil. The region spanning Asp122–Ile322 is the VWFA domain. One can recognise an Alpha-type protein kinase domain in the interval Thr386–Pro600. Position 570–576 (Gly570–Lys576) interacts with ATP. Residues Phe602–Tyr625 form a disordered region.

It belongs to the protein kinase superfamily. Alpha-type protein kinase family. ALPK subfamily. In terms of assembly, interacts with calmodulin; in the presence of calcium. Autophosphorylated, in vitro.

The protein localises to the cytoplasm. The protein resides in the cytosol. It localises to the perinuclear region. Its subcellular location is the contractile vacuole membrane. It carries out the reaction L-seryl-[protein] + ATP = O-phospho-L-seryl-[protein] + ADP + H(+). It catalyses the reaction L-threonyl-[protein] + ATP = O-phospho-L-threonyl-[protein] + ADP + H(+). Autophosphorylation activity enhanced by calcium/calmodulin. In terms of biological role, displays a modest preference for threonine over serine residues. Does not phosphorylate myosin II, however can phosphorylate MBP, in vitro. May be involved in the regulation of myosin II function during cytokinesis. Overexpression leads to impaired cell proliferation in suspension culture and fails to develop beyond the mound stage. Both overexpression and absence of the gene can result in defects in cytokinesis and alterations in myosin II abundance and assembly. The chain is Alpha-protein kinase vwkA (vwkA) from Dictyostelium discoideum (Social amoeba).